Consider the following 368-residue polypeptide: tRNA N6-adenosine threonylcarbamoyltransferase (368 aa).

Residues His-108 and His-112 each coordinate Fe cation. Substrate contacts are provided by residues 149–153 (LVSGG), Asp-183, Gly-196, Asp-200, and Asn-301. Position 329 (Asp-329) interacts with Fe cation.

The protein belongs to the KAE1 / TsaD family. Fe(2+) is required as a cofactor.

The protein localises to the cytoplasm. It carries out the reaction L-threonylcarbamoyladenylate + adenosine(37) in tRNA = N(6)-L-threonylcarbamoyladenosine(37) in tRNA + AMP + H(+). In terms of biological role, required for the formation of a threonylcarbamoyl group on adenosine at position 37 (t(6)A37) in tRNAs that read codons beginning with adenine. Is involved in the transfer of the threonylcarbamoyl moiety of threonylcarbamoyl-AMP (TC-AMP) to the N6 group of A37, together with TsaE and TsaB. TsaD likely plays a direct catalytic role in this reaction. This is tRNA N6-adenosine threonylcarbamoyltransferase from Paenarthrobacter aurescens (strain TC1).